Here is a 259-residue protein sequence, read N- to C-terminus: Insulin-induced gene 1 protein (259 aa).

Residues 1-66 (MPRLHDHVWN…ARPGSWHHDL (66 aa)) are Cytoplasmic-facing. The disordered stretch occupies residues 36 to 55 (PGVPEPEHAPRGQRAGTTGC). Residues 67–89 (VQRSLVLFSFGVVLALVLNLLQI) form a helical membrane-spanning segment. Over 90-108 (QRNVTLFPDEVIATIFSSA) the chain is Extracellular. A helical membrane pass occupies residues 109–126 (WWVPPCCGTAAAVVGLLY). Residues 127–141 (PCIDSHLGEPHKFKR) are Cytoplasmic-facing. Glycyl lysine isopeptide (Lys-Gly) (interchain with G-Cter in ubiquitin) cross-links involve residues Lys-138 and Lys-140. Residues 142-164 (EWASVMRCIAVFVGINHASAKLD) form a helical membrane-spanning segment. Topologically, residues 165–167 (FAN) are extracellular. A helical membrane pass occupies residues 168-186 (NVQLSLTLAALSLGLWWTF). At 187–191 (DRSRS) the chain is on the cytoplasmic side. Ser-189 bears the Phosphoserine mark. A helical transmembrane segment spans residues 192-213 (GLGLGITIAFLATLITQFLVYN). Residues 214–227 (GVYQYTSPDFLYIR) are Extracellular-facing. Residues 228–245 (SWLPCIFFSGGVTVGNIG) traverse the membrane as a helical segment. Residues 246 to 259 (RQLAMGVPEKPHSD) lie on the Cytoplasmic side of the membrane. The KxHxx motif lies at 253 to 259 (PEKPHSD).

Belongs to the INSIG family. In terms of assembly, interacts with SCAP; interaction is direct and only takes place in the presence of sterols; it prevents interaction between SCAP and the coat protein complex II (COPII). Associates with the SCAP-SREBP complex (composed of SCAP and SREBF1/SREBP1 or SREBF2/SREBP2); association is mediated via its interaction with SCAP and only takes place in the presence of sterols. Interaction with SCAP is mutually exclusive with PAQR3. Interacts with HMGCR (via its SSD); the interaction, accelerated by sterols, leads to the recruitment of HMGCR to AMFR/gp78 for its ubiquitination by the sterol-mediated ERAD pathway. Interacts with AMFR/gp78 (via its membrane domain); the interaction recruits HMCR at the ER membrane for its ubiquitination and degradation by the sterol-mediated ERAD pathway. Interacts with SOAT2/ACAT2; leading to promote recruitment of AMFR/gp78 and subsequent ubiquitination of SOAT2/ACAT2. Interacts with RNF139. Interacts with RNF145. Post-translationally, phosphorylation at Ser-189 by PCK1 reduces binding to oxysterol, disrupting the interaction between INSIG1 and SCAP, thereby promoting nuclear translocation of SREBP proteins (SREBF1/SREBP1 or SREBF2/SREBP2) and subsequent transcription of downstream lipogenesis-related genes. Ubiquitinated by AMFR/gp78 in response to sterol deprivation, leading to its degradation: when the SCAP-SREBP complex becomes dissociated from INSIG1, INSIG1 is then ubiquitinated and degraded in proteasomes. Although ubiquitination is required for rapid INSIG1 degradation, it is not required for release of the SCAP-SREBP complex. Ubiquitinated by RNF139.

Its subcellular location is the endoplasmic reticulum membrane. In terms of biological role, oxysterol-binding protein that mediates feedback control of cholesterol synthesis by controlling both endoplasmic reticulum to Golgi transport of SCAP and degradation of HMGCR. Acts as a negative regulator of cholesterol biosynthesis by mediating the retention of the SCAP-SREBP complex in the endoplasmic reticulum, thereby blocking the processing of sterol regulatory element-binding proteins (SREBPs) SREBF1/SREBP1 and SREBF2/SREBP2. Binds oxysterol, including 25-hydroxycholesterol, regulating interaction with SCAP and retention of the SCAP-SREBP complex in the endoplasmic reticulum. In presence of oxysterol, interacts with SCAP, retaining the SCAP-SREBP complex in the endoplasmic reticulum, thereby preventing SCAP from escorting SREBF1/SREBP1 and SREBF2/SREBP2 to the Golgi. Sterol deprivation or phosphorylation by PCK1 reduce oxysterol-binding, disrupting the interaction between INSIG1 and SCAP, thereby promoting Golgi transport of the SCAP-SREBP complex, followed by processing and nuclear translocation of SREBF1/SREBP1 and SREBF2/SREBP2. Also regulates cholesterol synthesis by regulating degradation of HMGCR: initiates the sterol-mediated ubiquitin-mediated endoplasmic reticulum-associated degradation (ERAD) of HMGCR via recruitment of the reductase to the ubiquitin ligases AMFR/gp78 and/or RNF139. Also regulates degradation of SOAT2/ACAT2 when the lipid levels are low: initiates the ubiquitin-mediated degradation of SOAT2/ACAT2 via recruitment of the ubiquitin ligases AMFR/gp78. The chain is Insulin-induced gene 1 protein from Mus musculus (Mouse).